The following is a 374-amino-acid chain: STAGKVIKCKAAVLWEPKKPFSIEEVEVAPPKAHEVRVKIIATGICRSDDHVISGVLVMPFPIILGHEAAGVVESVGEGVTSVKPGDKVIPLFVPQCGECSVCLSTKGNLCRKNDIGPASALMPDGTSRFTCKGKAIHHFAGTSTFTEYTVLHETAVAKIDAAAPLEKVCLIGCGFSTGYGAALQTAKVEPGSTCAVFGLGGVGLSVVMGCKAAGASRIIGVDINKDKFAKAKELGATDCVNPKDFTKPIHEVLMEMTGLGVDYSFEVIGHTETMAAALASCHFNYGVSVIVGVPPAAEKLSFDPMLLFSGRTWKGSVFGGWKSKDSVPKLVADYMEKKFVLDPLITHTLPFHKINEGFDLLRTGKSIRSVLLF.

N-acetylserine is present on Ser-1. Zn(2+)-binding residues include Cys-46, His-67, Cys-97, Cys-100, Cys-103, Cys-111, and Cys-174. NAD(+)-binding positions include 199–204 (GLGGVG), Asp-223, Lys-228, 292–294 (VGV), and Arg-369.

Belongs to the zinc-containing alcohol dehydrogenase family. Class-I subfamily. In terms of assembly, homodimer. The cofactor is Zn(2+).

It is found in the cytoplasm. The catalysed reaction is a primary alcohol + NAD(+) = an aldehyde + NADH + H(+). The enzyme catalyses a secondary alcohol + NAD(+) = a ketone + NADH + H(+). The polypeptide is Alcohol dehydrogenase 1 (ADH1) (Struthio camelus (Common ostrich)).